Consider the following 323-residue polypeptide: Ribose 1,5-bisphosphate isomerase (323 aa).

Residues 22–25 (RGAA) and Arg-65 each bind substrate. Cys-130 (proton acceptor) is an active-site residue. Asp-199 serves as the catalytic Proton donor. Substrate contacts are provided by residues 209-210 (NK) and Lys-235. Lys-210 participates in a covalent cross-link: Glycyl lysine isopeptide (Lys-Gly) (interchain with G-Cter in SAMP2).

This sequence belongs to the eIF-2B alpha/beta/delta subunits family. R15P isomerase subfamily.

It catalyses the reaction alpha-D-ribose 1,5-bisphosphate = D-ribulose 1,5-bisphosphate. Functionally, catalyzes the isomerization of ribose 1,5-bisphosphate (R15P) to ribulose 1,5-bisphosphate (RuBP), the CO(2) acceptor and substrate for RubisCO. Functions in an archaeal AMP degradation pathway, together with AMP phosphorylase and RubisCO. This is Ribose 1,5-bisphosphate isomerase from Haloferax volcanii (strain ATCC 29605 / DSM 3757 / JCM 8879 / NBRC 14742 / NCIMB 2012 / VKM B-1768 / DS2) (Halobacterium volcanii).